A 901-amino-acid chain; its full sequence is Protein translocase subunit SecA 1 (901 aa).

Residues Gln-89, 107-111 (GEGKT), and Asp-502 each bind ATP. The disordered stretch occupies residues 856–875 (AEAKASGDARPGFVEDDPST). Zn(2+)-binding residues include Cys-885, Cys-887, Cys-896, and His-897.

Belongs to the SecA family. As to quaternary structure, monomer and homodimer. Part of the essential Sec protein translocation apparatus which comprises SecA, SecYEG and auxiliary proteins SecDF-YajC and YidC. Zn(2+) is required as a cofactor.

It localises to the cell inner membrane. It is found in the cytoplasm. The enzyme catalyses ATP + H2O + cellular proteinSide 1 = ADP + phosphate + cellular proteinSide 2.. In terms of biological role, part of the Sec protein translocase complex. Interacts with the SecYEG preprotein conducting channel. Has a central role in coupling the hydrolysis of ATP to the transfer of proteins into and across the cell membrane, serving both as a receptor for the preprotein-SecB complex and as an ATP-driven molecular motor driving the stepwise translocation of polypeptide chains across the membrane. The sequence is that of Protein translocase subunit SecA 1 from Ruegeria pomeroyi (strain ATCC 700808 / DSM 15171 / DSS-3) (Silicibacter pomeroyi).